Consider the following 87-residue polypeptide: Putative regulatory protein GTNG_1019 (87 aa).

It belongs to the RemA family.

This is Putative regulatory protein GTNG_1019 from Geobacillus thermodenitrificans (strain NG80-2).